Consider the following 332-residue polypeptide: MDPRSEVLLRQAELFQGPLLIAGAPADDLLGQLPQAQAWTWHAGDQAMLESRFAGRSHYGVEAPEAAFESAVLFLPKSRELAAYLLNTLASRLAGRELYLVGEKRGGIEGAAKQLAAFGKPRKLDSARHCQLWQVTIDQAPQAKPLESLAERFELALEDGPLQVVSLPGVFSHGRLDRGTALLLKHLDGLPGGHMLDFGCGAGVLGATLKRRYPQSRVTLLDVDAFAVAASRLTLAANGLEGEVISGDGIDAAPTELSLILSNPPFHTGVHTNYQASENLLKKSAVHLRKGGEMRLVANSFLRYQPLIEGALGNCQVRDEADGFRIYQATRG.

The protein belongs to the methyltransferase superfamily. RsmC family. Monomer.

Its subcellular location is the cytoplasm. It carries out the reaction guanosine(1207) in 16S rRNA + S-adenosyl-L-methionine = N(2)-methylguanosine(1207) in 16S rRNA + S-adenosyl-L-homocysteine + H(+). In terms of biological role, specifically methylates the guanine in position 1207 of 16S rRNA in the 30S particle. The polypeptide is Ribosomal RNA small subunit methyltransferase C (Pseudomonas putida (strain ATCC 700007 / DSM 6899 / JCM 31910 / BCRC 17059 / LMG 24140 / F1)).